The primary structure comprises 68 residues: DNA gyrase inhibitor YacG (68 aa).

Residues cysteine 14, cysteine 17, cysteine 29, and cysteine 33 each coordinate Zn(2+).

This sequence belongs to the DNA gyrase inhibitor YacG family. In terms of assembly, interacts with GyrB. The cofactor is Zn(2+).

Inhibits all the catalytic activities of DNA gyrase by preventing its interaction with DNA. Acts by binding directly to the C-terminal domain of GyrB, which probably disrupts DNA binding by the gyrase. The protein is DNA gyrase inhibitor YacG of Azorhizobium caulinodans (strain ATCC 43989 / DSM 5975 / JCM 20966 / LMG 6465 / NBRC 14845 / NCIMB 13405 / ORS 571).